The sequence spans 520 residues: Glucose starvation modulator protein 1 (520 aa).

The segment at residues 20-48 (CVFCHEKHLQCSNERPCKNCVKRGLAHEC) is a DNA-binding region (zn(2)-C6 fungal-type). One can recognise a PAS domain in the interval 376 to 445 (DYEKLSQLNS…FRLFKTVAVG (70 aa)).

Belongs to the ERT1/acuK family.

It localises to the nucleus. Functionally, transcription factor which regulates nonfermentable carbon utilization. This chain is Glucose starvation modulator protein 1 (GSM1), found in Scheffersomyces stipitis (strain ATCC 58785 / CBS 6054 / NBRC 10063 / NRRL Y-11545) (Yeast).